A 320-amino-acid chain; its full sequence is MRSVIEPDHSIQLNEAIYCYDICTNDFAYNLIAVAFRKHLSLLLVGLPEESGEFGYTRLQDMDLGEKEQRSVSALAFSPDTSLNCTPNNVTLCAANGSQLKLYRTDLGQFTSLQVLRGHGDYVNDVSWVCDGELLASVSDDFTCRFWTTTGGGENVITFGLSSAGMSVKSHPEDPNKVLVAEKKGIIHLYNVTLKQTVISVESPKFPLMSADWAHSNRLFITSLAGGDVVTWDLNRPYVPADVKQVHEDCGRVVRFAPGSSEMVIAMVIGLTLKVFAAKSTVPLLEASLKSYGGMAWHQRLPYISAVSDRKLLFWKVQMK.

4 WD repeats span residues 67 to 113 (KEQR…FTSL), 118 to 157 (GHGD…ENVI), 160 to 200 (GLSS…TVIS), and 203 to 242 (SPKF…VPAD).

The protein resides in the nucleus. Its subcellular location is the nuclear pore complex. Its function is as follows. As part of the nuclear pore complex (NPC), has a role in its assembly and function. (Microbial infection) Required for optimal replication of E.chaffeensis. The polypeptide is Nucleoporin Nup37 (Drosophila melanogaster (Fruit fly)).